The chain runs to 151 residues: Mini-ribonuclease 3 (151 aa).

The active site involves D30.

It belongs to the MrnC RNase family. As to quaternary structure, homodimer. It depends on Mg(2+) as a cofactor.

Its subcellular location is the cytoplasm. Involved in correct processing of both the 5' and 3' ends of 23S rRNA precursor. Processes 30S rRNA precursor transcript even in absence of ribonuclease 3 (Rnc); Rnc processes 30S rRNA into smaller rRNA precursors. The sequence is that of Mini-ribonuclease 3 from Thermosynechococcus vestitus (strain NIES-2133 / IAM M-273 / BP-1).